We begin with the raw amino-acid sequence, 444 residues long: MPTTLMLLPCMLLLLLTAAAVAVGGTRLPLEVFEITPTTSTADKHKSLQYTVVYDAKDISGAAAATGVASSTVKPATEQLTVVSISSTAAAEKDLAESRRHARQMLQKQQQHRSIIGGKHGDRDVRILYQVGDSEEDLPVCAPNAVCSKIDLYETPWIERQCRCPESNRMPNNVIIHHHSHSSGSVDSLKYRNYYEREKMMQHKRMLLGEFQDKKFESLHMKKLMQKLGAVYEDDLDHLDQSPDYNDALPYAEVQDNEFPRGSAHMRHSGHRGSKEPATTFIGGCPSSLGVEDGHTIADKTRHYKMCQPVHKLPVCTHFRDYTWTLTTAAELNVTEQIVHCRCPRNSVTYLTKREPIGNGSPGYRYLFACSPLTRLRCQRKQPCKLFTVRKRQEFLDEVNINSLCQCPKGHRCPSHHTQSGVIAGESFLEDNIQTYSGYCMAND.

A signal peptide spans 1-24 (MPTTLMLLPCMLLLLLTAAAVAVG). Two-fingered domain 1 part repeat units lie at residues 123-165 (RDVR…CRCP) and 285-307 (CPSSLGVEDGHTIADKTRHYKMC). 8 disulfides stabilise this stretch: C141–C162, C147–C285, C164–C307, C316–C341, C343–C370, C378–C405, C384–C413, and C407–C440. 2 Two-fingered domain repeats span residues 316-370 (CTHF…LFAC) and 378-444 (CQRK…MAND). N333 is a glycosylation site (N-linked (GlcNAc...) asparagine).

As to quaternary structure, interacts with spi. During embryogenesis, expression is in a segmental pattern in the ectoderm and in the nervous system. In the eye imaginal disks, expression in photoreceptor cells begins a few rows posterior to the morphogenetic furrow. Also expressed in the wing disk. In the adult, expression is seen in the retina and lamina.

The protein resides in the secreted. In terms of biological role, regulates cell determination; development of ommatidia and optic lobe. Is a signaling molecule involved in the process of axon pathfinding in the eye. Part of the Ras pathway regulating programmed cell death in pupal eyes; activated by lozenge (lz). Antagonist for the Egfr receptor (gurken). Inhibits Egfr signaling without interacting directly with the receptor, but instead by sequestering the Egfr-activating ligand spitz (spi). This is Protein giant-lens (aos) from Drosophila melanogaster (Fruit fly).